A 325-amino-acid polypeptide reads, in one-letter code: MNSSFHLHFLDLNLNATEGNLSGPNVKNKSSPCEDMGIAVEVFLTLGVISLLENILVIGAIVKNKNLHSPMYFFVCSLAVADMLVSMSSAWETITIYLLNNKHLVIADAFVRHIDNVFDSMICISVVASMCSLLAIAVDRYVTIFYALRYHHIMTARRSGAIIAGIWAFCTGCGIVFILYSESTYVILCLISMFFAMLFLLVSLYIHMFLLARTHVKRIAALPGASSARQRTSMQGAVTVTMLLGVFTVCWAPFFLHLTLMLSCPQNLYCSRFMSHFNMYLILIMCNSVMDPLIYAFRSQEMRKTFKEIICCRGFRIACSFPRRD.

The Extracellular segment spans residues 1–37 (MNSSFHLHFLDLNLNATEGNLSGPNVKNKSSPCEDMG). N-linked (GlcNAc...) asparagine glycans are attached at residues Asn2, Asn15, Asn20, and Asn28. The chain crosses the membrane as a helical span at residues 38 to 61 (IAVEVFLTLGVISLLENILVIGAI). At 62–73 (VKNKNLHSPMYF) the chain is on the cytoplasmic side. A helical transmembrane segment spans residues 74 to 97 (FVCSLAVADMLVSMSSAWETITIY). Topologically, residues 98–114 (LLNNKHLVIADAFVRHI) are extracellular. The helical transmembrane segment at 115–138 (DNVFDSMICISVVASMCSLLAIAV) threads the bilayer. Over 139–155 (DRYVTIFYALRYHHIMT) the chain is Cytoplasmic. A helical membrane pass occupies residues 156–179 (ARRSGAIIAGIWAFCTGCGIVFIL). Residues 180 to 186 (YSESTYV) are Extracellular-facing. The chain crosses the membrane as a helical span at residues 187-211 (ILCLISMFFAMLFLLVSLYIHMFLL). The Cytoplasmic portion of the chain corresponds to 212-239 (ARTHVKRIAALPGASSARQRTSMQGAVT). The chain crosses the membrane as a helical span at residues 240–265 (VTMLLGVFTVCWAPFFLHLTLMLSCP). Residues 266–273 (QNLYCSRF) are Extracellular-facing. The helical transmembrane segment at 274–297 (MSHFNMYLILIMCNSVMDPLIYAF) threads the bilayer. Topologically, residues 298 to 325 (RSQEMRKTFKEIICCRGFRIACSFPRRD) are cytoplasmic. S-palmitoyl cysteine attachment occurs at residues Cys311 and Cys312.

Belongs to the G-protein coupled receptor 1 family. Expressed in the brain but not in the melanoma cells.

The protein resides in the cell membrane. Its function is as follows. Receptor for MSH (alpha, beta and gamma) and ACTH. The activity of this receptor is mediated by G proteins which activate adenylate cyclase. This receptor is a possible mediator of the immunomodulation properties of melanocortins. The protein is Melanocortin receptor 5 (MC5R) of Homo sapiens (Human).